The sequence spans 354 residues: Glutaminyl-peptide cyclotransferase (354 aa).

The N-terminal 8 residues, 1-8, are a transit peptide targeting the mitochondrion; the sequence is MRLLLRNY. Cys-136 and Cys-158 are joined by a disulfide. Asp-153 serves as a coordination point for Zn(2+). Glu-190 acts as the Proton acceptor in catalysis. Glu-191 provides a ligand contact to Zn(2+). The active-site Proton acceptor is Asp-228. Zn(2+) is bound at residue His-318.

It belongs to the glutaminyl-peptide cyclotransferase family.

Its subcellular location is the secreted. It is found in the mitochondrion. It carries out the reaction N-terminal L-glutaminyl-[peptide] = N-terminal 5-oxo-L-prolyl-[peptide] + NH4(+). With respect to regulation, inhibited by imidazoles (imidazole, benzimidazole, 1-benzylimidazole, 1-methylimidazole, P150/03 and N-omega-acetylhistamine) and cysteamines (cysteamine and N-dimethylcysteamine). Inhibited by PDB50 1(3,4-dimethoxyphenyl)-3-(3-imidazol-1-ylpropyl)thiourea. Acts as a glutaminyl-peptide cyclotransferase. Responsible for the biosynthesis of pyroglutamyl peptides. Might be more efficient in the conversion of tri and tetrapeptides in vitro. Might have a relative preference for substrates containing hydrophobic amino acids in vitro. The protein is Glutaminyl-peptide cyclotransferase of Drosophila melanogaster (Fruit fly).